Reading from the N-terminus, the 1161-residue chain is BMP-2-inducible protein kinase (1161 aa).

Residues M1–G20 form a disordered region. S14 carries the post-translational modification Phosphoserine. Residues V51–F316 enclose the Protein kinase domain. ATP contacts are provided by residues L57–V65 and K79. D180 functions as the Proton acceptor in the catalytic mechanism. Disordered regions lie at residues T358 to Q439, L453 to L495, T610 to D630, and E655 to L832. The segment covering I361–T394 has biased composition (polar residues). Composition is skewed to low complexity over residues L422–Q439 and Q460–Q485. Polar residues predominate over residues T610–P619. S689 is modified (phosphoserine). Composition is skewed to polar residues over residues S697–S718 and K726–K735. A Phosphoserine modification is found at S742. Residues E755–P779 are compositionally biased toward acidic residues. The span at E798–Y813 shows a compositional bias: basic and acidic residues. S817 and S818 each carry phosphoserine. A Phosphothreonine modification is found at T834. Residue S928 is modified to Phosphoserine. Positions S965–F1035 are disordered. The span at V970–R984 shows a compositional bias: basic residues. Positions T1000 to T1011 are enriched in low complexity. Residues S1029, S1031, S1032, S1039, S1041, S1076, S1107, and S1111 each carry the phosphoserine modification. A compositionally biased stretch (polar residues) spans T1137–P1146. A disordered region spans residues T1137–Q1161.

It belongs to the protein kinase superfamily. Ser/Thr protein kinase family. Autophosphorylated.

The protein localises to the nucleus. It catalyses the reaction L-seryl-[protein] + ATP = O-phospho-L-seryl-[protein] + ADP + H(+). The enzyme catalyses L-threonyl-[protein] + ATP = O-phospho-L-threonyl-[protein] + ADP + H(+). May be involved in osteoblast differentiation. The sequence is that of BMP-2-inducible protein kinase (BMP2K) from Homo sapiens (Human).